The primary structure comprises 232 residues: MAKLTRKQKAVAEQCDFQKSYKLEEAIELVQKITYTKFDASIDIAVHLGVDPRKADQMVRGTVVLPHGTGKNKRILVLCTPEKEKEAREAGADHVGLDDYIKKIEEGWVDIDVIITMPEIMAKVGRLGKILGPRGLMPNPKTGTVTVEIAKAVQAVKSGKIEYKVDKYGIVHASVGRVSFSKEALRDNAKELLATLLKAKPASAKGSYLKSISLASTMSKGVDVDTSTNFGF.

The protein belongs to the universal ribosomal protein uL1 family. In terms of assembly, part of the 50S ribosomal subunit.

In terms of biological role, binds directly to 23S rRNA. The L1 stalk is quite mobile in the ribosome, and is involved in E site tRNA release. Its function is as follows. Protein L1 is also a translational repressor protein, it controls the translation of the L11 operon by binding to its mRNA. This is Large ribosomal subunit protein uL1 from Amoebophilus asiaticus (strain 5a2).